The primary structure comprises 245 residues: Eukaryotic translation initiation factor 6 (245 aa).

Belongs to the eIF-6 family. In terms of assembly, monomer. Associates with the 60S ribosomal subunit.

It localises to the cytoplasm. The protein resides in the nucleus. The protein localises to the nucleolus. Functionally, binds to the 60S ribosomal subunit and prevents its association with the 40S ribosomal subunit to form the 80S initiation complex in the cytoplasm. May also be involved in ribosome biogenesis. In Drosophila melanogaster (Fruit fly), this protein is Eukaryotic translation initiation factor 6.